Here is a 540-residue protein sequence, read N- to C-terminus: Putative laccase-11 (540 aa).

Plastocyanin-like domains lie at 1-114 (MATV…PPRG), 124-279 (REVP…YYGA), and 389-523 (NFPA…NDGP). Cu cation-binding residues include H48, H50, H93, and H95. 7 residues coordinate Cu cation: H440, H443, H445, H502, C503, H504, and H508.

It belongs to the multicopper oxidase family. It depends on Cu cation as a cofactor.

It localises to the secreted. The protein localises to the extracellular space. Its subcellular location is the apoplast. It carries out the reaction 4 hydroquinone + O2 = 4 benzosemiquinone + 2 H2O. Functionally, lignin degradation and detoxification of lignin-derived products. The sequence is that of Putative laccase-11 (LAC11) from Oryza sativa subsp. japonica (Rice).